Here is a 62-residue protein sequence, read N- to C-terminus: MFTSKKSLLLLFFLGTINLSLCEEERDADEEERRDDPDEMNVEVEKRFLPLVGKILSGLIGK.

The first 22 residues, 1 to 22, serve as a signal peptide directing secretion; sequence MFTSKKSLLLLFFLGTINLSLC. Positions 23 to 45 are excised as a propeptide; that stretch reads EEERDADEEERRDDPDEMNVEVE. The residue at position 60 (I60) is an Isoleucine amide.

Expressed by the skin glands.

The protein localises to the secreted. In terms of biological role, antimicrobial activity against the Gram-positive bacterium S.aureus. This Lithobates palustris (Pickerel frog) protein is Temporin-1PLa.